Reading from the N-terminus, the 445-residue chain is Ribosomal protein uS12 methylthiotransferase RimO (445 aa).

An MTTase N-terminal domain is found at 6–121 (KKVAVVTLGC…ILETLEEAEK (116 aa)). Positions 15, 50, 84, 159, 163, and 166 each coordinate [4Fe-4S] cluster. Residues 145-375 (LSPKQYAYVK…MELQHDIAYE (231 aa)) enclose the Radical SAM core domain. Residues 378–445 (QRWVGQTLKV…SYDLMGEVVQ (68 aa)) enclose the TRAM domain.

The protein belongs to the methylthiotransferase family. RimO subfamily. [4Fe-4S] cluster is required as a cofactor.

It localises to the cytoplasm. It catalyses the reaction L-aspartate(89)-[ribosomal protein uS12]-hydrogen + (sulfur carrier)-SH + AH2 + 2 S-adenosyl-L-methionine = 3-methylsulfanyl-L-aspartate(89)-[ribosomal protein uS12]-hydrogen + (sulfur carrier)-H + 5'-deoxyadenosine + L-methionine + A + S-adenosyl-L-homocysteine + 2 H(+). In terms of biological role, catalyzes the methylthiolation of an aspartic acid residue of ribosomal protein uS12. This Desulfitobacterium hafniense (strain Y51) protein is Ribosomal protein uS12 methylthiotransferase RimO.